Reading from the N-terminus, the 529-residue chain is Serine/threonine-protein kinase RIO2 (529 aa).

The 177-residue stretch at 97–273 (VGNQIGIGKE…RDVTCVRTFF (177 aa)) folds into the Protein kinase domain. Lysine 123 provides a ligand contact to ATP. Residue aspartate 228 is the Proton acceptor of the active site. Disordered regions lie at residues 331–366 (RNRQ…KDHE) and 411–452 (EGYK…GHVA). Positions 337–346 (DLGEDEDDSD) are enriched in acidic residues. The span at 411-428 (EGYKDIELPPEDFKRPAD) shows a compositional bias: basic and acidic residues. Residues 429–447 (SENDDENDEDEEEGEEEDA) show a composition bias toward acidic residues.

Belongs to the protein kinase superfamily. RIO-type Ser/Thr kinase family. The cofactor is Mg(2+). In terms of tissue distribution, expressed in pharynx (metacorpus and posterior bulbus). Expression is restricted to adult stage.

It catalyses the reaction L-seryl-[protein] + ATP = O-phospho-L-seryl-[protein] + ADP + H(+). The catalysed reaction is L-threonyl-[protein] + ATP = O-phospho-L-threonyl-[protein] + ADP + H(+). Its function is as follows. Required for larval development. The chain is Serine/threonine-protein kinase RIO2 from Caenorhabditis elegans.